The chain runs to 296 residues: Elongation factor Ts (296 aa).

Positions 79-82 are involved in Mg(2+) ion dislocation from EF-Tu; the sequence is TDFV.

The protein belongs to the EF-Ts family.

It localises to the cytoplasm. Functionally, associates with the EF-Tu.GDP complex and induces the exchange of GDP to GTP. It remains bound to the aminoacyl-tRNA.EF-Tu.GTP complex up to the GTP hydrolysis stage on the ribosome. The chain is Elongation factor Ts from Paracoccus denitrificans (strain Pd 1222).